The following is a 258-amino-acid chain: Protein U52 (258 aa).

It belongs to the herpesviridae UL79 family.

This Human herpesvirus 6B (strain Z29) (HHV-6 variant B) protein is Protein U52 (U52).